Reading from the N-terminus, the 250-residue chain is 5'/3'-nucleotidase SurE (250 aa).

Asp9, Asp10, Ser40, and Asn93 together coordinate a divalent metal cation.

Belongs to the SurE nucleotidase family. Requires a divalent metal cation as cofactor.

The protein localises to the cytoplasm. The catalysed reaction is a ribonucleoside 5'-phosphate + H2O = a ribonucleoside + phosphate. The enzyme catalyses a ribonucleoside 3'-phosphate + H2O = a ribonucleoside + phosphate. It carries out the reaction [phosphate](n) + H2O = [phosphate](n-1) + phosphate + H(+). Its function is as follows. Nucleotidase with a broad substrate specificity as it can dephosphorylate various ribo- and deoxyribonucleoside 5'-monophosphates and ribonucleoside 3'-monophosphates with highest affinity to 3'-AMP. Also hydrolyzes polyphosphate (exopolyphosphatase activity) with the preference for short-chain-length substrates (P20-25). Might be involved in the regulation of dNTP and NTP pools, and in the turnover of 3'-mononucleotides produced by numerous intracellular RNases (T1, T2, and F) during the degradation of various RNAs. The sequence is that of 5'/3'-nucleotidase SurE from Yersinia enterocolitica serotype O:8 / biotype 1B (strain NCTC 13174 / 8081).